The chain runs to 304 residues: UDP-N-acetylenolpyruvoylglucosamine reductase (304 aa).

The region spanning 31–196 (KVGGPADYLA…ISAKFNLKPG (166 aa)) is the FAD-binding PCMH-type domain. Arginine 175 is a catalytic residue. The active-site Proton donor is the serine 225. Residue glutamate 295 is part of the active site.

Belongs to the MurB family. FAD serves as cofactor.

Its subcellular location is the cytoplasm. The catalysed reaction is UDP-N-acetyl-alpha-D-muramate + NADP(+) = UDP-N-acetyl-3-O-(1-carboxyvinyl)-alpha-D-glucosamine + NADPH + H(+). The protein operates within cell wall biogenesis; peptidoglycan biosynthesis. Functionally, cell wall formation. The polypeptide is UDP-N-acetylenolpyruvoylglucosamine reductase (Streptococcus thermophilus (strain ATCC BAA-491 / LMD-9)).